Reading from the N-terminus, the 859-residue chain is Fanconi anemia group B protein (859 aa).

An N-acetylthreonine modification is found at Thr-2.

As to quaternary structure, belongs to the multisubunit FA complex composed of FANCA, FANCB, FANCC, FANCE, FANCF, FANCG, FANCL/PHF9 and FANCM. The complex is not found in FA patients.

It localises to the nucleus. In terms of biological role, DNA repair protein required for FANCD2 ubiquitination. The polypeptide is Fanconi anemia group B protein (FANCB) (Homo sapiens (Human)).